The chain runs to 131 residues: Small ribosomal subunit protein uS11 (131 aa).

This sequence belongs to the universal ribosomal protein uS11 family. Part of the 30S ribosomal subunit. Interacts with proteins S7 and S18. Binds to IF-3.

In terms of biological role, located on the platform of the 30S subunit, it bridges several disparate RNA helices of the 16S rRNA. Forms part of the Shine-Dalgarno cleft in the 70S ribosome. The polypeptide is Small ribosomal subunit protein uS11 (Exiguobacterium sibiricum (strain DSM 17290 / CCUG 55495 / CIP 109462 / JCM 13490 / 255-15)).